A 232-amino-acid polypeptide reads, in one-letter code: Small ribosomal subunit protein uS3 (232 aa).

In terms of domain architecture, KH type-2 spans Val-39–Arg-107.

It belongs to the universal ribosomal protein uS3 family. Part of the 30S ribosomal subunit. Forms a tight complex with proteins S10 and S14.

Its function is as follows. Binds the lower part of the 30S subunit head. Binds mRNA in the 70S ribosome, positioning it for translation. This chain is Small ribosomal subunit protein uS3, found in Erwinia tasmaniensis (strain DSM 17950 / CFBP 7177 / CIP 109463 / NCPPB 4357 / Et1/99).